We begin with the raw amino-acid sequence, 248 residues long: Adenosylcobinamide-GDP ribazoletransferase (248 aa).

The next 7 membrane-spanning stretches (helical) occupy residues 24 to 44 (EINL…IGAW), 70 to 90 (VIIT…GLFS), 106 to 126 (VGAN…ALFL), 134 to 154 (ICWL…LLFA), 168 to 188 (IFLG…LAVL), 189 to 209 (GLFF…FTII), and 228 to 248 (AGGQ…WGLV).

This sequence belongs to the CobS family. Requires Mg(2+) as cofactor.

The protein resides in the cell membrane. It catalyses the reaction alpha-ribazole + adenosylcob(III)inamide-GDP = adenosylcob(III)alamin + GMP + H(+). It carries out the reaction alpha-ribazole 5'-phosphate + adenosylcob(III)inamide-GDP = adenosylcob(III)alamin 5'-phosphate + GMP + H(+). It participates in cofactor biosynthesis; adenosylcobalamin biosynthesis; adenosylcobalamin from cob(II)yrinate a,c-diamide: step 7/7. In terms of biological role, joins adenosylcobinamide-GDP and alpha-ribazole to generate adenosylcobalamin (Ado-cobalamin). Also synthesizes adenosylcobalamin 5'-phosphate from adenosylcobinamide-GDP and alpha-ribazole 5'-phosphate. The polypeptide is Adenosylcobinamide-GDP ribazoletransferase (Listeria monocytogenes serovar 1/2a (strain ATCC BAA-679 / EGD-e)).